The following is a 54-amino-acid chain: ComX pheromone (54 aa).

Positions M1–Y46 are excised as a propeptide. A lipid anchor (3'-geranyl-2',N2-cyclotryptophan) is attached at W51.

In terms of assembly, interacts directly with the sensor histidine kinase ComP and stimulates its activity. In terms of processing, trp-51 is modified by isoprenylation, probably by geranylation, which is essential for activity. Modified by the tryptophan prenyltransferase ComQ before export to the extracellular environment. The type of isoprenyl derivative differs among the different pherotypes and depends on ComX primary sequence.

The protein localises to the secreted. Its function is as follows. Part of a major quorum-sensing system that regulates the development of genetic competence. Acts through the activation of the two-component regulatory system ComP/ComA composed of a sensor histidine kinase, ComP, and a response regulator, ComA. This Bacillus mojavensis protein is ComX pheromone.